The primary structure comprises 515 residues: 2,3-bisphosphoglycerate-independent phosphoglycerate mutase (515 aa).

Asp-17 and Ser-67 together coordinate Mn(2+). The active-site Phosphoserine intermediate is Ser-67. Residues His-128, 157–158 (RD), Arg-190, Arg-196, 262–265 (RADR), and Lys-336 contribute to the substrate site. Asp-403, His-407, Asp-444, His-445, and His-463 together coordinate Mn(2+).

Belongs to the BPG-independent phosphoglycerate mutase family. In terms of assembly, monomer. It depends on Mn(2+) as a cofactor.

The enzyme catalyses (2R)-2-phosphoglycerate = (2R)-3-phosphoglycerate. It functions in the pathway carbohydrate degradation; glycolysis; pyruvate from D-glyceraldehyde 3-phosphate: step 3/5. Functionally, catalyzes the interconversion of 2-phosphoglycerate and 3-phosphoglycerate. The protein is 2,3-bisphosphoglycerate-independent phosphoglycerate mutase of Acinetobacter baylyi (strain ATCC 33305 / BD413 / ADP1).